Here is a 1034-residue protein sequence, read N- to C-terminus: Kinesin-like protein KIF28 (1034 aa).

The region spanning 16–363 (SVRVAVRVRP…LRYAERAKKV (348 aa)) is the Kinesin motor domain. An ATP-binding site is contributed by 119–126 (GQTGSGKS). The FHA domain maps to 465–528 (CEVGRAASNA…LQHLDRIILG (64 aa)). Coiled coils occupy residues 875–904 (NQVPELYQKLLKLEQETELLRDINRALRGE) and 994–1027 (HQQSQMLKDLEDLLESSLQKLKSDVAFIVKKKKE).

It belongs to the TRAFAC class myosin-kinesin ATPase superfamily. Kinesin family.

Its subcellular location is the mitochondrion membrane. Its function is as follows. Microtubule-dependent motor protein required for mitochondrion morphology and transport of mitochondria in neuronal cells. The polypeptide is Kinesin-like protein KIF28 (Rattus norvegicus (Rat)).